The following is a 630-amino-acid chain: Differentially expressed in FDCP 6 (630 aa).

Tyr210 is modified (phosphotyrosine). The PH domain occupies 216–312; sequence DVLKQGYLWK…WTAAIQTAIR (97 aa). Lys225 bears the N6-acetyllysine mark. 3 disordered regions span residues 318-341, 378-418, and 552-630; these read KTSL…RRRA, LQEE…ELKK, and HPIE…APGN. Composition is skewed to basic and acidic residues over residues 331–341 and 378–392; these read EQREQRERRRA and LQEE…HKEL. Residues 588–606 are compositionally biased toward polar residues; it reads WGSQGNRTLSVNSSEQKSL. The residue at position 590 (Ser590) is a Phosphoserine. The span at 620-630 shows a compositional bias: basic and acidic residues; it reads QEEKLDPAPGN.

As to quaternary structure, interacts with IRF4, activated RAC1 and F-actin. Both the phosphorylated and non-phosphorylated forms bind phosphatidylinositol 3,4,5-trisphosphate (PtdInsP3). Interacts with ZAP70. Interacts with RAB11A. Post-translationally, tyrosine-phosphorylated by tyrosine-protein kinase LCK in response to T-cell activation. In terms of tissue distribution, thymus.

It localises to the cytoplasm. It is found in the cell membrane. The protein resides in the nucleus. The protein localises to the cytoskeleton. Its subcellular location is the perinuclear region. It localises to the cell projection. It is found in the filopodium. Phosphatidylinositol 3,4,5-trisphosphate-dependent guanine nucleotide exchange factor (GEF) which plays a role in the activation of Rho GTPases RAC1, RhoA and CDC42. Can regulate cell morphology in cooperation with activated RAC1. Involved in immune homeostasis by ensuring proper trafficking and availability of T-cell regulator CTLA-4 at T-cell surface. Plays a role in Th2 (T helper cells) development and/or activation, perhaps by interfering with ZAP70 signaling. Required for optimal T-cell effector function, lymphocyte homeostasis and the prevention of systemic autoimmunity. The sequence is that of Differentially expressed in FDCP 6 (Def6) from Mus musculus (Mouse).